Consider the following 247-residue polypeptide: 2-dehydro-3-deoxy-phosphogluconate aldolase (247 aa).

It belongs to the DagF family.

The enzyme catalyses 2-dehydro-3-deoxy-6-phospho-D-gluconate = D-glyceraldehyde 3-phosphate + pyruvate. Involved in the catabolism of D-glucosaminate. Catalyzes the conversion of keto-3-deoxygluconate 6-phosphate (KDGP) to yield pyruvate and glyceraldehyde-3-phosphate. This Salmonella typhimurium (strain 14028s / SGSC 2262) protein is 2-dehydro-3-deoxy-phosphogluconate aldolase.